Consider the following 251-residue polypeptide: Triosephosphate isomerase (251 aa).

9–11 (NWK) lines the substrate pocket. His95 functions as the Electrophile in the catalytic mechanism. Glu167 acts as the Proton acceptor in catalysis. Substrate-binding positions include Gly173, Ser213, and 234–235 (GG).

Belongs to the triosephosphate isomerase family. In terms of assembly, homodimer.

Its subcellular location is the cytoplasm. The enzyme catalyses D-glyceraldehyde 3-phosphate = dihydroxyacetone phosphate. Its pathway is carbohydrate biosynthesis; gluconeogenesis. It participates in carbohydrate degradation; glycolysis; D-glyceraldehyde 3-phosphate from glycerone phosphate: step 1/1. In terms of biological role, involved in the gluconeogenesis. Catalyzes stereospecifically the conversion of dihydroxyacetone phosphate (DHAP) to D-glyceraldehyde-3-phosphate (G3P). This chain is Triosephosphate isomerase, found in Lacticaseibacillus casei (strain BL23) (Lactobacillus casei).